Here is a 151-residue protein sequence, read N- to C-terminus: Class I hydrophobin A (151 aa).

Residues 1–17 (MQFSVAAVLALATAVAA) form the signal peptide. 4 cysteine pairs are disulfide-bonded: Cys52-Cys125, Cys60-Cys119, Cys61-Cys101, and Cys126-Cys144.

The protein belongs to the fungal hydrophobin family. As to quaternary structure, interacts with cutinase cutL1 in a pH-dependent manner. Self-assembles to form functional amyloid fibrils called rodlets. Self-assembly into fibrillar rodlets occurs spontaneously at hydrophobic:hydrophilic interfaces and the rodlets further associate laterally to form amphipathic monolayers. rolA rodlet formation is regulated by the strength of ionic interactions between rolA molecules. Three types of self-assembled structures of rolA are observed: spherical, rod-like, and mesh-like.

It localises to the secreted. Its subcellular location is the cell wall. Functionally, aerial growth, conidiation, and dispersal of filamentous fungi in the environment rely upon a capability of their secreting small amphipathic proteins called hydrophobins (HPBs) with low sequence identity. Class I can self-assemble into an outermost layer of rodlet bundles on aerial cell surfaces, conferring cellular hydrophobicity that supports fungal growth, development and dispersal; whereas Class II form highly ordered films at water-air interfaces through intermolecular interactions but contribute nothing to the rodlet structure. RolA is a class I hydrophobin that undergoes a conformational change after its adsorption to hydrophobic surfaces such as the biodegradable polyester polybutylene succinate-coadipate (PBSA) and recruits the cutinase cutL1, resulting in condensation of cutL1 on the PBSA surface and consequent stimulation of PBSA hydrolysis. Increases also the activity of polyethylene terephthalate hydrolase (PETase) that hydrolyzes polyethylene terephthalate (PET), one of the most well-known polyesters that is widely used as packaging material, when the PET samples are preincubated with the hydrophobin. The wetting effect of rolA probably acts on PET surface to become hydrophilic, which leads PETase easier to contact and attack the surface. This is Class I hydrophobin A from Aspergillus oryzae (strain ATCC 42149 / RIB 40) (Yellow koji mold).